Reading from the N-terminus, the 371-residue chain is Glutamate 5-kinase (371 aa).

Lys12 is a binding site for ATP. Positions 52, 136, and 148 each coordinate substrate. ATP-binding positions include 168 to 169 and 210 to 216; these read SD and TGGMRTK. One can recognise a PUA domain in the interval 275 to 354; that stretch reads QGEILVDEGA…EDIAEKFGYS (80 aa).

This sequence belongs to the glutamate 5-kinase family.

Its subcellular location is the cytoplasm. It catalyses the reaction L-glutamate + ATP = L-glutamyl 5-phosphate + ADP. It functions in the pathway amino-acid biosynthesis; L-proline biosynthesis; L-glutamate 5-semialdehyde from L-glutamate: step 1/2. In terms of biological role, catalyzes the transfer of a phosphate group to glutamate to form L-glutamate 5-phosphate. The protein is Glutamate 5-kinase of Idiomarina loihiensis (strain ATCC BAA-735 / DSM 15497 / L2-TR).